Here is a 335-residue protein sequence, read N- to C-terminus: Peroxidase 53 (335 aa).

An N-terminal signal peptide occupies residues 1–30 (MAVTNLPTCDGLFIISLIVIVSSIFGTSSA). Glutamine 31 carries the pyrrolidone carboxylic acid modification. N-linked (GlcNAc...) asparagine glycans are attached at residues asparagine 33 and asparagine 43. 4 cysteine pairs are disulfide-bonded: cysteine 41–cysteine 121, cysteine 74–cysteine 79, cysteine 127–cysteine 329, and cysteine 206–cysteine 238. Catalysis depends on histidine 72, which acts as the Proton acceptor. The Ca(2+) site is built by aspartate 73, valine 76, glycine 78, aspartate 80, and serine 82. Residue asparagine 165 is glycosylated (N-linked (GlcNAc...) asparagine). Proline 169 provides a ligand contact to substrate. The N-linked (GlcNAc...) asparagine glycan is linked to asparagine 177. Histidine 199 serves as a coordination point for heme b. Threonine 200 provides a ligand contact to Ca(2+). N-linked (GlcNAc...) asparagine glycans are attached at residues asparagine 215, asparagine 227, and asparagine 241. Positions 251, 254, and 259 each coordinate Ca(2+). Asparagine 297 carries N-linked (GlcNAc...) asparagine glycosylation.

Belongs to the peroxidase family. Classical plant (class III) peroxidase subfamily. The cofactor is Ca(2+). Requires heme b as cofactor. In terms of tissue distribution, mainly expressed in roots.

The protein resides in the secreted. It carries out the reaction 2 a phenolic donor + H2O2 = 2 a phenolic radical donor + 2 H2O. Removal of H(2)O(2), oxidation of toxic reductants, biosynthesis and degradation of lignin, suberization, auxin catabolism, response to environmental stresses such as wounding, pathogen attack and oxidative stress. These functions might be dependent on each isozyme/isoform in each plant tissue. Functionally, closely linked to lignin formation by showing monolignol substrate specificity. This chain is Peroxidase 53 (PER53), found in Arabidopsis thaliana (Mouse-ear cress).